We begin with the raw amino-acid sequence, 426 residues long: Histidine--tRNA ligase (426 aa).

Belongs to the class-II aminoacyl-tRNA synthetase family. In terms of assembly, homodimer.

It is found in the cytoplasm. The enzyme catalyses tRNA(His) + L-histidine + ATP = L-histidyl-tRNA(His) + AMP + diphosphate + H(+). The chain is Histidine--tRNA ligase from Streptococcus pyogenes serotype M28 (strain MGAS6180).